Consider the following 640-residue polypeptide: Chaperone protein DnaK (640 aa).

The residue at position 196 (Thr196) is a Phosphothreonine; by autocatalysis. Residues 547–569 (GDKIPSDKRPALEGALEKLKDAT) are compositionally biased toward basic and acidic residues. Disordered stretches follow at residues 547 to 575 (GDKI…GTTE) and 595 to 640 (LYQA…GNGK). Polar residues predominate over residues 603-615 (TNASEPTQNTDGS). The span at 625 to 634 (GEVENAEFEV) shows a compositional bias: acidic residues.

This sequence belongs to the heat shock protein 70 family.

In terms of biological role, acts as a chaperone. In Chlorobium phaeobacteroides (strain DSM 266 / SMG 266 / 2430), this protein is Chaperone protein DnaK.